A 98-amino-acid polypeptide reads, in one-letter code: Co-chaperonin GroES (98 aa).

The segment at 35-57 (EKPQEGKVISAGPGRVDDKGTRV) is disordered.

Belongs to the GroES chaperonin family. In terms of assembly, heptamer of 7 subunits arranged in a ring. Interacts with the chaperonin GroEL.

It localises to the cytoplasm. In terms of biological role, together with the chaperonin GroEL, plays an essential role in assisting protein folding. The GroEL-GroES system forms a nano-cage that allows encapsulation of the non-native substrate proteins and provides a physical environment optimized to promote and accelerate protein folding. GroES binds to the apical surface of the GroEL ring, thereby capping the opening of the GroEL channel. This chain is Co-chaperonin GroES, found in Cutibacterium acnes (strain DSM 16379 / KPA171202) (Propionibacterium acnes).